We begin with the raw amino-acid sequence, 210 residues long: uncharacterized protein (210 aa).

Disordered regions lie at residues 1 to 21 (MHRL…TDAI) and 168 to 210 (EALQ…STAQ). A coiled-coil region spans residues 21–175 (IDSLDKRSDS…ELEALQQESS (155 aa)). Polar residues predominate over residues 174 to 184 (SSWLGDQSTAE).

The protein belongs to the SNF7 family.

This is an uncharacterized protein from Schizosaccharomyces pombe (strain 972 / ATCC 24843) (Fission yeast).